Here is a 450-residue protein sequence, read N- to C-terminus: Histidinol dehydrogenase (450 aa).

NAD(+) is bound by residues Tyr135, Gln197, and Asn225. 3 residues coordinate substrate: Thr248, Gln270, and His273. 2 residues coordinate Zn(2+): Gln270 and His273. Active-site proton acceptor residues include Glu339 and His340. Substrate is bound by residues His340, Asp373, Glu427, and His432. Residue Asp373 participates in Zn(2+) binding. His432 provides a ligand contact to Zn(2+).

This sequence belongs to the histidinol dehydrogenase family. Zn(2+) is required as a cofactor.

It catalyses the reaction L-histidinol + 2 NAD(+) + H2O = L-histidine + 2 NADH + 3 H(+). It functions in the pathway amino-acid biosynthesis; L-histidine biosynthesis; L-histidine from 5-phospho-alpha-D-ribose 1-diphosphate: step 9/9. Functionally, catalyzes the sequential NAD-dependent oxidations of L-histidinol to L-histidinaldehyde and then to L-histidine. This chain is Histidinol dehydrogenase, found in Corynebacterium jeikeium (strain K411).